The chain runs to 321 residues: uncharacterized protein (321 aa).

The active-site Proton donor is the tyrosine 49. Residue histidine 106 coordinates substrate.

Belongs to the aldo/keto reductase family.

This is an uncharacterized protein from Caenorhabditis elegans.